A 181-amino-acid polypeptide reads, in one-letter code: I-Kappa-B like protein C2 (181 aa).

ANK repeat units follow at residues 54–86 (DGKX…DINS), 91–121 (DGNT…DMEI), and 125–154 (ARKT…RCDV).

It belongs to the polydnaviridae I-Kappa-B-like protein family.

In terms of biological role, suppresses the host immune response through NF-kappa-B inactivation. Possesses ankyrin repeat domains required for NF-kappa-B binding but lacks the regulatory regions required for dissociation from NF-kappa-B and degradation. Therefore, prevents host NF-kappa-B release and subsequent activation. The polypeptide is I-Kappa-B like protein C2 (C2) (Microplitis demolitor (Parasitoid wasp)).